The primary structure comprises 178 residues: ATP synthase subunit delta (178 aa).

Belongs to the ATPase delta chain family. In terms of assembly, F-type ATPases have 2 components, F(1) - the catalytic core - and F(0) - the membrane proton channel. F(1) has five subunits: alpha(3), beta(3), gamma(1), delta(1), epsilon(1). F(0) has three main subunits: a(1), b(2) and c(10-14). The alpha and beta chains form an alternating ring which encloses part of the gamma chain. F(1) is attached to F(0) by a central stalk formed by the gamma and epsilon chains, while a peripheral stalk is formed by the delta and b chains.

Its subcellular location is the cell inner membrane. In terms of biological role, f(1)F(0) ATP synthase produces ATP from ADP in the presence of a proton or sodium gradient. F-type ATPases consist of two structural domains, F(1) containing the extramembraneous catalytic core and F(0) containing the membrane proton channel, linked together by a central stalk and a peripheral stalk. During catalysis, ATP synthesis in the catalytic domain of F(1) is coupled via a rotary mechanism of the central stalk subunits to proton translocation. Functionally, this protein is part of the stalk that links CF(0) to CF(1). It either transmits conformational changes from CF(0) to CF(1) or is implicated in proton conduction. This chain is ATP synthase subunit delta, found in Pseudomonas aeruginosa (strain UCBPP-PA14).